Consider the following 122-residue polypeptide: Large ribosomal subunit protein uL14 (122 aa).

This sequence belongs to the universal ribosomal protein uL14 family. Part of the 50S ribosomal subunit. Forms a cluster with proteins L3 and L19. In the 70S ribosome, L14 and L19 interact and together make contacts with the 16S rRNA in bridges B5 and B8. Can interact with ribosomal silencing factor RsfS, which may inhibit ribosomal subunit association.

Its function is as follows. Binds to 23S rRNA. Forms part of two intersubunit bridges in the 70S ribosome. This is Large ribosomal subunit protein uL14 from Synechocystis sp. (strain ATCC 27184 / PCC 6803 / Kazusa).